A 598-amino-acid chain; its full sequence is UvrABC system protein C (598 aa).

The GIY-YIG domain occupies aspartate 14–isoleucine 91. A UVR domain is found at aspartate 196–methionine 231.

It belongs to the UvrC family. Interacts with UvrB in an incision complex.

It is found in the cytoplasm. The UvrABC repair system catalyzes the recognition and processing of DNA lesions. UvrC both incises the 5' and 3' sides of the lesion. The N-terminal half is responsible for the 3' incision and the C-terminal half is responsible for the 5' incision. This Streptococcus pyogenes serotype M3 (strain ATCC BAA-595 / MGAS315) protein is UvrABC system protein C.